The chain runs to 130 residues: Small ribosomal subunit protein uS9 (130 aa).

It belongs to the universal ribosomal protein uS9 family.

In Neisseria meningitidis serogroup C (strain 053442), this protein is Small ribosomal subunit protein uS9.